The sequence spans 428 residues: Hercynine oxygenase (428 aa).

Histidine 46 provides a ligand contact to Fe cation. 82 to 85 serves as a coordination point for gamma-L-glutamyl-L-cysteine; it reads RASR. The Fe cation site is built by histidine 129 and histidine 133. Positions 411 and 415 each coordinate gamma-L-glutamyl-L-cysteine.

It belongs to the EgtB family. As to quaternary structure, monomer. The cofactor is Fe(2+).

It catalyses the reaction gamma-L-glutamyl-L-cysteine + hercynine + O2 = gamma-L-glutamyl-hercynylcysteine S-oxide + H2O. Its pathway is amino-acid biosynthesis; ergothioneine biosynthesis. Its function is as follows. Catalyzes the oxidative sulfurization of hercynine (N-alpha,N-alpha,N-alpha-trimethyl-L-histidine) into hercynyl-gamma-L-glutamyl-L-cysteine sulfoxide, a step in the biosynthesis pathway of ergothioneine. Cannot use the alternative thiols cysteine, N-acetylcysteine, or glutathione instead of gamma-glutamylcysteine as substrates, and histidine is a poor sulfur acceptor substrate compared to hercynine. This chain is Hercynine oxygenase, found in Mycolicibacterium smegmatis (strain ATCC 700084 / mc(2)155) (Mycobacterium smegmatis).